Here is a 216-residue protein sequence, read N- to C-terminus: Somatotropin (216 aa).

Positions 1-25 (MAPGSWFSPLFITVITLGLQWPQEA) are cleaved as a signal peptide. Position 46 (His-46) interacts with Zn(2+). Cys-78 and Cys-189 form a disulfide bridge. Glu-198 provides a ligand contact to Zn(2+). Residues Cys-206 and Cys-214 are joined by a disulfide bond.

This sequence belongs to the somatotropin/prolactin family.

It is found in the secreted. Growth hormone plays an important role in growth control. This chain is Somatotropin (GH), found in Anas platyrhynchos (Mallard).